We begin with the raw amino-acid sequence, 49 residues long: Small, acid-soluble spore protein K (49 aa).

Positions 1 to 49 are disordered; sequence MRNKSRGFPNMNNNKFEGEPRAKDDFASKRPDGSTNTHPQERMRASGKR. Composition is skewed to basic and acidic residues over residues 16–32 and 39–49; these read FEGE…KRPD and PQERMRASGKR.

Belongs to the SspK family.

The protein resides in the spore core. The chain is Small, acid-soluble spore protein K from Bacillus licheniformis (strain ATCC 14580 / DSM 13 / JCM 2505 / CCUG 7422 / NBRC 12200 / NCIMB 9375 / NCTC 10341 / NRRL NRS-1264 / Gibson 46).